The primary structure comprises 525 residues: GMP synthase [glutamine-hydrolyzing] (525 aa).

A Glutamine amidotransferase type-1 domain is found at Pro-8–Asp-206. Cys-85 acts as the Nucleophile in catalysis. Residues His-180 and Glu-182 contribute to the active site. Residues Trp-207 to Arg-400 form the GMPS ATP-PPase domain. ATP is bound at residue Ser-234–Ser-240.

Homodimer.

The enzyme catalyses XMP + L-glutamine + ATP + H2O = GMP + L-glutamate + AMP + diphosphate + 2 H(+). Its pathway is purine metabolism; GMP biosynthesis; GMP from XMP (L-Gln route): step 1/1. Its function is as follows. Catalyzes the synthesis of GMP from XMP. The sequence is that of GMP synthase [glutamine-hydrolyzing] from Legionella pneumophila subsp. pneumophila (strain Philadelphia 1 / ATCC 33152 / DSM 7513).